The following is a 304-amino-acid chain: Acetylglutamate kinase (304 aa).

Substrate is bound by residues Gly74 to Gly75, Arg96, and Asn201.

The protein belongs to the acetylglutamate kinase family. ArgB subfamily.

The protein localises to the cytoplasm. The catalysed reaction is N-acetyl-L-glutamate + ATP = N-acetyl-L-glutamyl 5-phosphate + ADP. It functions in the pathway amino-acid biosynthesis; L-arginine biosynthesis; N(2)-acetyl-L-ornithine from L-glutamate: step 2/4. Its function is as follows. Catalyzes the ATP-dependent phosphorylation of N-acetyl-L-glutamate. In Alkalilimnicola ehrlichii (strain ATCC BAA-1101 / DSM 17681 / MLHE-1), this protein is Acetylglutamate kinase.